Reading from the N-terminus, the 130-residue chain is Small ribosomal subunit protein uS9 (130 aa).

Residues 102-130 form a disordered region; the sequence is GFLTRDPRMKERKKYGLKKARRSPQFSKR. Residues 111–130 show a composition bias toward basic residues; the sequence is KERKKYGLKKARRSPQFSKR.

It belongs to the universal ribosomal protein uS9 family.

The chain is Small ribosomal subunit protein uS9 from Clostridium botulinum (strain ATCC 19397 / Type A).